The primary structure comprises 376 residues: UDP-N-acetylglucosamine--N-acetylmuramyl-(pentapeptide) pyrophosphoryl-undecaprenol N-acetylglucosamine transferase (376 aa).

UDP-N-acetyl-alpha-D-glucosamine-binding positions include 11–13 (TGG), N117, R160, S208, and Q310.

Belongs to the glycosyltransferase 28 family. MurG subfamily.

The protein resides in the cell inner membrane. It catalyses the reaction di-trans,octa-cis-undecaprenyl diphospho-N-acetyl-alpha-D-muramoyl-L-alanyl-D-glutamyl-meso-2,6-diaminopimeloyl-D-alanyl-D-alanine + UDP-N-acetyl-alpha-D-glucosamine = di-trans,octa-cis-undecaprenyl diphospho-[N-acetyl-alpha-D-glucosaminyl-(1-&gt;4)]-N-acetyl-alpha-D-muramoyl-L-alanyl-D-glutamyl-meso-2,6-diaminopimeloyl-D-alanyl-D-alanine + UDP + H(+). It functions in the pathway cell wall biogenesis; peptidoglycan biosynthesis. In terms of biological role, cell wall formation. Catalyzes the transfer of a GlcNAc subunit on undecaprenyl-pyrophosphoryl-MurNAc-pentapeptide (lipid intermediate I) to form undecaprenyl-pyrophosphoryl-MurNAc-(pentapeptide)GlcNAc (lipid intermediate II). The polypeptide is UDP-N-acetylglucosamine--N-acetylmuramyl-(pentapeptide) pyrophosphoryl-undecaprenol N-acetylglucosamine transferase (Rickettsia africae (strain ESF-5)).